We begin with the raw amino-acid sequence, 94 residues long: Co-chaperonin GroES (94 aa).

Belongs to the GroES chaperonin family. In terms of assembly, heptamer of 7 subunits arranged in a ring. Interacts with the chaperonin GroEL.

The protein resides in the cytoplasm. Together with the chaperonin GroEL, plays an essential role in assisting protein folding. The GroEL-GroES system forms a nano-cage that allows encapsulation of the non-native substrate proteins and provides a physical environment optimized to promote and accelerate protein folding. GroES binds to the apical surface of the GroEL ring, thereby capping the opening of the GroEL channel. The polypeptide is Co-chaperonin GroES (Listeria innocua serovar 6a (strain ATCC BAA-680 / CLIP 11262)).